The primary structure comprises 282 residues: MKIINTVQEMQQITNELRASGKSIGFVPTMGYLHEGHATLLRKAREENEIVVLSVFVNPLQFGPNEDLDRYPRDIDRDENVAKENSVDYLFYPSVEEMYPAEQTTTVEVVKRTDVLCGKQRPGHFAGVAIVLMKLFNITLPTRAYFGMKDAQQVAVIEGFVADFNIPVTIVPVDIVREEDGLAKSSRNVYLSPEEREEALHLYRSLCIAKERIETGERNAEIITTLVKEYIETYTKGTVDYADLYAYPSLQVVDKIEGRIILAIAVKFDNVRLIDNITLTVK.

30–37 (MGYLHEGH) is an ATP binding site. His-37 acts as the Proton donor in catalysis. Gln-61 is a (R)-pantoate binding site. Gln-61 contacts beta-alanine. Residue 147-150 (GMKD) coordinates ATP. Gln-153 serves as a coordination point for (R)-pantoate. Residues Val-176 and 184–187 (KSSR) each bind ATP.

This sequence belongs to the pantothenate synthetase family. Homodimer.

The protein resides in the cytoplasm. The catalysed reaction is (R)-pantoate + beta-alanine + ATP = (R)-pantothenate + AMP + diphosphate + H(+). The protein operates within cofactor biosynthesis; (R)-pantothenate biosynthesis; (R)-pantothenate from (R)-pantoate and beta-alanine: step 1/1. Functionally, catalyzes the condensation of pantoate with beta-alanine in an ATP-dependent reaction via a pantoyl-adenylate intermediate. The polypeptide is Pantothenate synthetase (Bacillus cereus (strain AH187)).